Consider the following 480-residue polypeptide: Probable glycosyltransferase 2 (480 aa).

Residues 1–21 (MGQEGMGYNNGKGGGGGGGGL) show a composition bias toward gly residues. Positions 1 to 45 (MGQEGMGYNNGKGGGGGGGGLPMTAPRPRGASPLSSHGHHHRSRK) are disordered. The Cytoplasmic portion of the chain corresponds to 1-49 (MGQEGMGYNNGKGGGGGGGGLPMTAPRPRGASPLSSHGHHHRSRKIHRT). The chain crosses the membrane as a helical; Signal-anchor for type II membrane protein span at residues 50 to 72 (FNNVKITVLCGLVTILVLRGTIG). The Lumenal segment spans residues 73-480 (LNLSLPNQPT…DVKAKISTTS (408 aa)). Asn-74, Asn-124, Asn-129, and Asn-458 each carry an N-linked (GlcNAc...) asparagine glycan.

It belongs to the glycosyltransferase 34 family.

It is found in the golgi apparatus membrane. Probable glycosyltransferase that may be involved in the biosynthesis of xyloglucan. This Oryza sativa subsp. indica (Rice) protein is Probable glycosyltransferase 2.